Consider the following 73-residue polypeptide: MAGSGLFFKWANNKHAKSVCKPSSLQINSLEKVKPGIIPLFFNQKMEAKEPEKKTPSMEAKATSLSPNKASAS.

Positions 48–73 are disordered; that stretch reads AKEPEKKTPSMEAKATSLSPNKASAS. Over residues 63 to 73 the composition is skewed to polar residues; the sequence is TSLSPNKASAS.

This is an uncharacterized protein from Saccharomyces cerevisiae (strain ATCC 204508 / S288c) (Baker's yeast).